The sequence spans 167 residues: NADH-quinone oxidoreductase subunit B (167 aa).

Residues Cys-40, Cys-41, Cys-105, and Cys-134 each coordinate [4Fe-4S] cluster.

Belongs to the complex I 20 kDa subunit family. In terms of assembly, NDH-1 is composed of 14 different subunits. Subunits NuoB, C, D, E, F, and G constitute the peripheral sector of the complex. The cofactor is [4Fe-4S] cluster.

Its subcellular location is the cell inner membrane. It catalyses the reaction a quinone + NADH + 5 H(+)(in) = a quinol + NAD(+) + 4 H(+)(out). In terms of biological role, NDH-1 shuttles electrons from NADH, via FMN and iron-sulfur (Fe-S) centers, to quinones in the respiratory chain. The immediate electron acceptor for the enzyme in this species is believed to be ubiquinone. Couples the redox reaction to proton translocation (for every two electrons transferred, four hydrogen ions are translocated across the cytoplasmic membrane), and thus conserves the redox energy in a proton gradient. The polypeptide is NADH-quinone oxidoreductase subunit B (Campylobacter jejuni subsp. jejuni serotype O:2 (strain ATCC 700819 / NCTC 11168)).